We begin with the raw amino-acid sequence, 421 residues long: Lipid II:glycine glycyltransferase (421 aa).

It belongs to the FemABX family. Monomer.

The protein localises to the cytoplasm. It carries out the reaction beta-D-GlcNAc-(1-&gt;4)-Mur2Ac(oyl-L-Ala-D-isoglutaminyl-L-Lys-D-Ala-D-Ala)-di-trans,octa-cis-undecaprenyl diphosphate + glycyl-tRNA(Gly) = beta-D-GlcNAc-(1-&gt;4)-Mur2Ac(oyl-L-Ala-D-isoglutaminyl-L-Lys-(N(6)-Gly)-D-Ala-D-Ala)-di-trans,octa-cis-undecaprenyl diphosphate + tRNA(Gly) + H(+). Functionally, catalyzes the incorporation of the first glycine of the pentaglycine interpeptide bridge, which is characteristic of the S.aureus peptidoglycan. This glycine is added to the epsilon-amino group of the L-lysine of the membrane-bound lipid II intermediate (GlcNAc-(beta-1,4)-N-acetylmuramic acid(-L-Ala-D-iGln-L-Lys-D-Ala-D-Ala)-pyrophosphoryl-undecaprenol), using glycyl-tRNA(Gly) as donor, in a ribosome-independent mechanism. Involved in methicillin resistance. In Staphylococcus aureus (strain Mu50 / ATCC 700699), this protein is Lipid II:glycine glycyltransferase (femX).